Here is a 375-residue protein sequence, read N- to C-terminus: Aminomethyltransferase (375 aa).

This sequence belongs to the GcvT family. As to quaternary structure, the glycine cleavage system is composed of four proteins: P, T, L and H.

It catalyses the reaction N(6)-[(R)-S(8)-aminomethyldihydrolipoyl]-L-lysyl-[protein] + (6S)-5,6,7,8-tetrahydrofolate = N(6)-[(R)-dihydrolipoyl]-L-lysyl-[protein] + (6R)-5,10-methylene-5,6,7,8-tetrahydrofolate + NH4(+). The glycine cleavage system catalyzes the degradation of glycine. This is Aminomethyltransferase from Cupriavidus pinatubonensis (strain JMP 134 / LMG 1197) (Cupriavidus necator (strain JMP 134)).